The chain runs to 178 residues: Inorganic pyrophosphatase (178 aa).

Residues K29, R43, and Y55 each contribute to the substrate site. Positions 65, 70, and 102 each coordinate Mg(2+). Y141 is a binding site for substrate.

Belongs to the PPase family. In terms of assembly, homohexamer. Requires Mg(2+) as cofactor.

It localises to the cytoplasm. The enzyme catalyses diphosphate + H2O = 2 phosphate + H(+). In terms of biological role, catalyzes the hydrolysis of inorganic pyrophosphate (PPi) forming two phosphate ions. The polypeptide is Inorganic pyrophosphatase (Rickettsia typhi (strain ATCC VR-144 / Wilmington)).